We begin with the raw amino-acid sequence, 929 residues long: Transcription initiation factor TFIID subunit 3 (929 aa).

2 disordered regions span residues I131–E152 and L176–L197. A phosphoserine mark is found at S183, S199, S229, and S243. Disordered regions lie at residues T221 to Q358 and D405 to E578. The span at T265 to T288 shows a compositional bias: low complexity. An N6-acetyllysine modification is found at K266. Residues S291, S297, and S301 each carry the phosphoserine modification. 2 stretches are compositionally biased toward polar residues: residues P340–Q358 and P434–M466. Position 501 is a phosphothreonine (T501). A compositionally biased stretch (basic and acidic residues) spans P504–K514. The span at K523–E537 shows a compositional bias: basic residues. Residues K538–E578 are compositionally biased toward basic and acidic residues. A Glycyl lysine isopeptide (Lys-Gly) (interchain with G-Cter in SUMO2) cross-link involves residue K581. Basic and acidic residues-rich tracts occupy residues K603–E612 and K621–K648. The interval K603–P658 is disordered. A Phosphoserine modification is found at S667. Residues E692–K701 are compositionally biased toward basic and acidic residues. Positions E692–E748 are disordered. A compositionally biased stretch (basic residues) spans K702–E713. The segment covering K714–K737 has biased composition (basic and acidic residues). Residue K746 forms a Glycyl lysine isopeptide (Lys-Gly) (interchain with G-Cter in SUMO2) linkage. S755 is subject to Phosphoserine. K776 bears the N6-acetyllysine mark. Over residues V778–P787 the composition is skewed to low complexity. The interval V778 to L807 is disordered. Residues K793 to G804 show a composition bias toward pro residues. A PHD-type zinc finger spans residues I865–K915. Zn(2+)-binding residues include C868, C871, C883, C886, H891, C894, C909, and C912.

Belongs to the TAF3 family. As to quaternary structure, component of the TFIID basal transcription factor complex, composed of TATA-box-binding protein TBP, and a number of TBP-associated factors (TAFs), including TAF1, TAF2, TAF3, TAF4, TAF5, TAF6, TAF7, TAF8, TAF9, TAF10, TAF11, TAF12 and TAF13. Interacts with TAF10 via the histone fold. Interacts with TAF13, TBP, SAP130 and GCN5L2. Interacts with TBPL2.

Its subcellular location is the nucleus. Functionally, the TFIID basal transcription factor complex plays a major role in the initiation of RNA polymerase II (Pol II)-dependent transcription. TFIID recognizes and binds promoters with or without a TATA box via its subunit TBP, a TATA-box-binding protein, and promotes assembly of the pre-initiation complex (PIC). The TFIID complex consists of TBP and TBP-associated factors (TAFs), including TAF1, TAF2, TAF3, TAF4, TAF5, TAF6, TAF7, TAF8, TAF9, TAF10, TAF11, TAF12 and TAF13. The TFIID complex structure can be divided into 3 modules TFIID-A, TFIID-B, and TFIID-C. TAF3 forms the TFIID-A module together with TAF5 and TBP. Required in complex with TBPL2 for the differentiation of myoblasts into myocytes. The TAF3-TBPL2 complex replaces TFIID at specific promoters at an early stage in the differentiation process. This is Transcription initiation factor TFIID subunit 3 (TAF3) from Homo sapiens (Human).